The following is an 83-amino-acid chain: Kunitz-type serine protease inhibitor textilinin-4 (83 aa).

The N-terminal stretch at Met1–Ser24 is a signal peptide. Positions Cys31–Cys81 constitute a BPTI/Kunitz inhibitor domain. Intrachain disulfides connect Cys31–Cys81, Cys40–Cys64, and Cys56–Cys77.

The protein belongs to the venom Kunitz-type family. As to expression, expressed by the venom gland.

It localises to the secreted. In terms of biological role, serine protease inhibitor. Does not inhibit plasmin, and does not reduce blood loss in the mouse tail vein blood loss model. The polypeptide is Kunitz-type serine protease inhibitor textilinin-4 (Pseudonaja textilis textilis (Eastern brown snake)).